A 657-amino-acid polypeptide reads, in one-letter code: Glycogen debranching enzyme (657 aa).

Aspartate 336 (nucleophile) is an active-site residue. The Proton donor role is filled by glutamate 371. A compositionally biased stretch (basic and acidic residues) spans 458-467 (NEANGEENRD). Residues 458-479 (NEANGEENRDGTNNNYSNNHGK) form a disordered region.

It belongs to the glycosyl hydrolase 13 family.

The catalysed reaction is Hydrolysis of (1-&gt;6)-alpha-D-glucosidic linkages to branches with degrees of polymerization of three or four glucose residues in limit dextrin.. Its pathway is glycan degradation; glycogen degradation. In terms of biological role, removes maltotriose and maltotetraose chains that are attached by 1,6-alpha-linkage to the limit dextrin main chain, generating a debranched limit dextrin. This chain is Glycogen debranching enzyme, found in Escherichia coli (strain K12 / DH10B).